The sequence spans 87 residues: DNA/RNA-binding protein Alba (87 aa).

The residue at position 9 (K9) is an N6-acetyllysine.

It belongs to the histone-like Alba family. Acetylated. Acetylation at Lys-9 decreases DNA-binding affinity.

Its subcellular location is the cytoplasm. The protein localises to the chromosome. Functionally, binds double-stranded DNA tightly but without sequence specificity. Involved in DNA compaction. The protein is DNA/RNA-binding protein Alba of Methanocaldococcus jannaschii (strain ATCC 43067 / DSM 2661 / JAL-1 / JCM 10045 / NBRC 100440) (Methanococcus jannaschii).